A 709-amino-acid polypeptide reads, in one-letter code: Phosphoribosylformylglycinamidine synthase subunit PurL (709 aa).

His36 is an active-site residue. ATP-binding residues include Tyr39 and Lys80. Glu82 is a Mg(2+) binding site. Substrate contacts are provided by residues 83-86 and Arg105; that span reads SHNH. His84 acts as the Proton acceptor in catalysis. Asp106 provides a ligand contact to Mg(2+). Residue Gln226 participates in substrate binding. Asp252 is a Mg(2+) binding site. A substrate-binding site is contributed by 294-296; sequence ETQ. ATP-binding residues include Asp470 and Gly507. Residue Ser510 participates in substrate binding.

The protein belongs to the FGAMS family. Monomer. Part of the FGAM synthase complex composed of 1 PurL, 1 PurQ and 2 PurS subunits.

It is found in the cytoplasm. It catalyses the reaction N(2)-formyl-N(1)-(5-phospho-beta-D-ribosyl)glycinamide + L-glutamine + ATP + H2O = 2-formamido-N(1)-(5-O-phospho-beta-D-ribosyl)acetamidine + L-glutamate + ADP + phosphate + H(+). It participates in purine metabolism; IMP biosynthesis via de novo pathway; 5-amino-1-(5-phospho-D-ribosyl)imidazole from N(2)-formyl-N(1)-(5-phospho-D-ribosyl)glycinamide: step 1/2. Part of the phosphoribosylformylglycinamidine synthase complex involved in the purines biosynthetic pathway. Catalyzes the ATP-dependent conversion of formylglycinamide ribonucleotide (FGAR) and glutamine to yield formylglycinamidine ribonucleotide (FGAM) and glutamate. The FGAM synthase complex is composed of three subunits. PurQ produces an ammonia molecule by converting glutamine to glutamate. PurL transfers the ammonia molecule to FGAR to form FGAM in an ATP-dependent manner. PurS interacts with PurQ and PurL and is thought to assist in the transfer of the ammonia molecule from PurQ to PurL. The chain is Phosphoribosylformylglycinamidine synthase subunit PurL from Saccharolobus islandicus (strain M.16.4 / Kamchatka #3) (Sulfolobus islandicus).